The chain runs to 465 residues: UDP-N-acetylmuramate--L-alanine ligase (465 aa).

112–118 (GTHGKTT) provides a ligand contact to ATP.

It belongs to the MurCDEF family.

It is found in the cytoplasm. It carries out the reaction UDP-N-acetyl-alpha-D-muramate + L-alanine + ATP = UDP-N-acetyl-alpha-D-muramoyl-L-alanine + ADP + phosphate + H(+). It participates in cell wall biogenesis; peptidoglycan biosynthesis. In terms of biological role, cell wall formation. This Burkholderia multivorans (strain ATCC 17616 / 249) protein is UDP-N-acetylmuramate--L-alanine ligase.